The primary structure comprises 348 residues: Flap endonuclease 1 (348 aa).

Residues 1-98 (MGLAELRELI…ETLERRRERK (98 aa)) are N-domain. 7 residues coordinate Mg(2+): aspartate 28, aspartate 80, glutamate 149, glutamate 151, aspartate 170, aspartate 172, and aspartate 234. Residues 113–256 (EREKYARQVA…RALQLIRKYG (144 aa)) are I-domain. The segment at 340–348 (RQETLDAFF) is interaction with PCNA.

It belongs to the XPG/RAD2 endonuclease family. FEN1 subfamily. In terms of assembly, interacts with PCNA. PCNA stimulates the nuclease activity without altering cleavage specificity. The cofactor is Mg(2+).

Structure-specific nuclease with 5'-flap endonuclease and 5'-3' exonuclease activities involved in DNA replication and repair. During DNA replication, cleaves the 5'-overhanging flap structure that is generated by displacement synthesis when DNA polymerase encounters the 5'-end of a downstream Okazaki fragment. Binds the unpaired 3'-DNA end and kinks the DNA to facilitate 5' cleavage specificity. Cleaves one nucleotide into the double-stranded DNA from the junction in flap DNA, leaving a nick for ligation. Also involved in the base excision repair (BER) pathway. Acts as a genome stabilization factor that prevents flaps from equilibrating into structures that lead to duplications and deletions. Also possesses 5'-3' exonuclease activity on nicked or gapped double-stranded DNA. The protein is Flap endonuclease 1 of Methanopyrus kandleri (strain AV19 / DSM 6324 / JCM 9639 / NBRC 100938).